A 144-amino-acid polypeptide reads, in one-letter code: Superoxide dismutase [Mn], mitochondrial (144 aa).

3 residues coordinate Mn(2+): H10, H58, and D143.

This sequence belongs to the iron/manganese superoxide dismutase family. In terms of assembly, homotetramer. It depends on Mn(2+) as a cofactor.

It localises to the mitochondrion matrix. It carries out the reaction 2 superoxide + 2 H(+) = H2O2 + O2. In terms of biological role, destroys superoxide anion radicals which are normally produced within the cells and which are toxic to biological systems. This is Superoxide dismutase [Mn], mitochondrial from Branchiostoma floridae (Florida lancelet).